The chain runs to 360 residues: Arginase, non-hepatic 1 (360 aa).

Mn(2+)-binding residues include histidine 122, aspartate 145, histidine 147, and aspartate 149. Residues 147-151, 158-160, and aspartate 204 each bind substrate; these read HADIN and SGN. Positions 253 and 255 each coordinate Mn(2+). Substrate contacts are provided by threonine 267 and glutamate 298.

It belongs to the arginase family. In terms of assembly, homotrimer. It depends on Mn(2+) as a cofactor. Expressed at differing tadpole stages in tail, intestine, hindlimb and trunk region. Most abundant in tadpole tail.

It carries out the reaction L-arginine + H2O = urea + L-ornithine. It functions in the pathway nitrogen metabolism; urea cycle; L-ornithine and urea from L-arginine: step 1/1. Its function is as follows. As well as its role in the urea cycle, may be involved in tissue remodeling. The chain is Arginase, non-hepatic 1 (arg2-a) from Xenopus laevis (African clawed frog).